Here is a 984-residue protein sequence, read N- to C-terminus: Putative formate dehydrogenase SAR2393 (984 aa).

In terms of domain architecture, 2Fe-2S ferredoxin-type spans 3 to 79; that stretch reads EHLVVTLDGK…PMTVNTVNND (77 aa). [2Fe-2S] cluster is bound by residues Cys37, Cys48, Cys51, and Cys63. Residues 79 to 119 form the 4Fe-4S His(Cys)3-ligated-type domain; it reads DVKDAQKEALDRILEKHMLYCTVCDYNNGDCEIHNTMDAWG. Positions 95, 99, 102, 109, 147, 150, 153, 157, 190, 193, 196, 200, 264, 267, 271, and 299 each coordinate [4Fe-4S] cluster. 2 4Fe-4S ferredoxin-type domains span residues 138–165 and 181–211; these read PFYRYDPNQCILCGRCVEACQDIELNET and NDVPINESSCVSCGQCATVCPCNAMMEVNME. The segment at 252-984 is formate dehydrogenase; sequence MRKERIKKTK…YVFPGNQVDK (733 aa). Positions 257-313 constitute a 4Fe-4S Mo/W bis-MGD-type domain; the sequence is IKKTKTVCTYCGVGCSFEVWTKDREILKVQPSHDSPANKIATCVKGKFSWGHINSDQ.

It in the C-terminal section; belongs to the prokaryotic molybdopterin-containing oxidoreductase family. [2Fe-2S] cluster is required as a cofactor. [4Fe-4S] cluster serves as cofactor. The cofactor is Mo-bis(molybdopterin guanine dinucleotide).

It catalyses the reaction formate + NAD(+) = CO2 + NADH. This Staphylococcus aureus (strain MRSA252) protein is Putative formate dehydrogenase SAR2393.